Here is a 201-residue protein sequence, read N- to C-terminus: MTDISAVAGQPALVRNELNLVWLDMEMTGLDPDTDRIIEIAVVVTNSTLDIAVEGPVLAIHQSDETLAKMDDWNKNTHGRSGLIDRVRASSVTEADAAAQIAAFLARHVPPGKSPMCGNSICQDRRFMARWMPELERFFHYRNLDVSTLKELCRRWQPAIYKGFQKRAMHTALADIHESIDELKYYRERFLIPAAPAGETA.

The 164-residue stretch at 20–183 folds into the Exonuclease domain; it reads LVWLDMEMTG…ADIHESIDEL (164 aa). Tyr-141 is a catalytic residue.

This sequence belongs to the oligoribonuclease family.

Its subcellular location is the cytoplasm. Functionally, 3'-to-5' exoribonuclease specific for small oligoribonucleotides. The protein is Oligoribonuclease of Burkholderia pseudomallei (strain 1106a).